The following is a 279-amino-acid chain: Acetylglutamate kinase (279 aa).

Substrate contacts are provided by residues 64–65 (GG), R86, and N177.

It belongs to the acetylglutamate kinase family. ArgB subfamily.

It localises to the cytoplasm. It carries out the reaction N-acetyl-L-glutamate + ATP = N-acetyl-L-glutamyl 5-phosphate + ADP. The protein operates within amino-acid biosynthesis; L-arginine biosynthesis; N(2)-acetyl-L-ornithine from L-glutamate: step 2/4. Its function is as follows. Catalyzes the ATP-dependent phosphorylation of N-acetyl-L-glutamate. This chain is Acetylglutamate kinase, found in Campylobacter jejuni subsp. jejuni serotype O:6 (strain 81116 / NCTC 11828).